A 223-amino-acid polypeptide reads, in one-letter code: Urease accessory protein UreF (223 aa).

This sequence belongs to the UreF family. As to quaternary structure, ureD, UreF and UreG form a complex that acts as a GTP-hydrolysis-dependent molecular chaperone, activating the urease apoprotein by helping to assemble the nickel containing metallocenter of UreC. The UreE protein probably delivers the nickel.

The protein localises to the cytoplasm. Functionally, required for maturation of urease via the functional incorporation of the urease nickel metallocenter. In Rhizobium meliloti (strain 1021) (Ensifer meliloti), this protein is Urease accessory protein UreF.